Reading from the N-terminus, the 959-residue chain is Isoleucine--tRNA ligase (959 aa).

Positions 60-70 match the 'HIGH' region motif; it reads PYANGSLHMGH. L-isoleucyl-5'-AMP is bound at residue glutamate 569. Residues 610-614 carry the 'KMSKS' region motif; that stretch reads KMSKS. Lysine 613 lines the ATP pocket. Cysteine 928, cysteine 931, cysteine 948, and cysteine 951 together coordinate Zn(2+).

Belongs to the class-I aminoacyl-tRNA synthetase family. IleS type 1 subfamily. As to quaternary structure, monomer. It depends on Zn(2+) as a cofactor.

It is found in the cytoplasm. The catalysed reaction is tRNA(Ile) + L-isoleucine + ATP = L-isoleucyl-tRNA(Ile) + AMP + diphosphate. Functionally, catalyzes the attachment of isoleucine to tRNA(Ile). As IleRS can inadvertently accommodate and process structurally similar amino acids such as valine, to avoid such errors it has two additional distinct tRNA(Ile)-dependent editing activities. One activity is designated as 'pretransfer' editing and involves the hydrolysis of activated Val-AMP. The other activity is designated 'posttransfer' editing and involves deacylation of mischarged Val-tRNA(Ile). The chain is Isoleucine--tRNA ligase from Rippkaea orientalis (strain PCC 8801 / RF-1) (Cyanothece sp. (strain PCC 8801)).